The following is a 466-amino-acid chain: Methylenetetrahydrofolate--tRNA-(uracil-5-)-methyltransferase TrmFO (466 aa).

G14 to G19 provides a ligand contact to FAD.

This sequence belongs to the MnmG family. TrmFO subfamily. The cofactor is FAD.

The protein resides in the cytoplasm. It catalyses the reaction uridine(54) in tRNA + (6R)-5,10-methylene-5,6,7,8-tetrahydrofolate + NADH + H(+) = 5-methyluridine(54) in tRNA + (6S)-5,6,7,8-tetrahydrofolate + NAD(+). The enzyme catalyses uridine(54) in tRNA + (6R)-5,10-methylene-5,6,7,8-tetrahydrofolate + NADPH + H(+) = 5-methyluridine(54) in tRNA + (6S)-5,6,7,8-tetrahydrofolate + NADP(+). Its function is as follows. Catalyzes the folate-dependent formation of 5-methyl-uridine at position 54 (M-5-U54) in all tRNAs. This is Methylenetetrahydrofolate--tRNA-(uracil-5-)-methyltransferase TrmFO from Brucella canis (strain ATCC 23365 / NCTC 10854 / RM-666).